The following is a 508-amino-acid chain: Anthranilate synthase component 1 (508 aa).

Residues S49 and 282–284 (PYM) each bind L-tryptophan. 317–318 (GT) serves as a coordination point for chorismate. E344 contributes to the Mg(2+) binding site. Chorismate is bound by residues Y432, R452, 466-468 (GAG), and G468. A Mg(2+)-binding site is contributed by E481.

This sequence belongs to the anthranilate synthase component I family. Heterotetramer consisting of two non-identical subunits: a beta subunit (TrpG) and a large alpha subunit (TrpE). Mg(2+) is required as a cofactor.

It catalyses the reaction chorismate + L-glutamine = anthranilate + pyruvate + L-glutamate + H(+). It functions in the pathway amino-acid biosynthesis; L-tryptophan biosynthesis; L-tryptophan from chorismate: step 1/5. With respect to regulation, feedback inhibited by tryptophan. Functionally, part of a heterotetrameric complex that catalyzes the two-step biosynthesis of anthranilate, an intermediate in the biosynthesis of L-tryptophan. In the first step, the glutamine-binding beta subunit (TrpG) of anthranilate synthase (AS) provides the glutamine amidotransferase activity which generates ammonia as a substrate that, along with chorismate, is used in the second step, catalyzed by the large alpha subunit of AS (TrpE) to produce anthranilate. In the absence of TrpG, TrpE can synthesize anthranilate directly from chorismate and high concentrations of ammonia. This is Anthranilate synthase component 1 (trpE) from Bacillus caldotenax.